The sequence spans 65 residues: Large ribosomal subunit protein bL35 (65 aa).

The disordered stretch occupies residues 1 to 26 (MPKMKTNRASAKRFKKTASGGFKAGQ).

The protein belongs to the bacterial ribosomal protein bL35 family.

This Oenococcus oeni (strain ATCC BAA-331 / PSU-1) protein is Large ribosomal subunit protein bL35.